Here is a 374-residue protein sequence, read N- to C-terminus: 4-galactosyl-N-acetylglucosaminide 3-alpha-L-fucosyltransferase FUT5 (374 aa).

Residues 1–15 (MDPLGPAKPQWLWRR) are Cytoplasmic-facing. A helical; Signal-anchor for type II membrane protein transmembrane segment spans residues 16–34 (CLAGLLFQLLVAVCFFSYL). The Lumenal segment spans residues 35-374 (RVSQDHATGS…TVRSIAAWFT (340 aa)). N-linked (GlcNAc...) asparagine glycans are attached at residues Asn-60, Asn-105, Asn-167, and Asn-198.

The protein belongs to the glycosyltransferase 10 family.

It localises to the golgi apparatus. The protein localises to the golgi stack membrane. It catalyses the reaction a beta-D-galactosyl-(1-&gt;3)-N-acetyl-beta-D-glucosaminyl derivative + GDP-beta-L-fucose = a beta-D-galactosyl-(1-&gt;3)-[alpha-L-fucosyl-(1-&gt;4)]-N-acetyl-beta-D-glucosaminyl derivative + GDP + H(+). The catalysed reaction is an N-acetyl-alpha-neuraminyl-(2-&gt;3)-beta-D-galactosyl-(1-&gt;4)-N-acetyl-beta-D-glucosaminyl derivative + GDP-beta-L-fucose = an alpha-Neu5Ac-(2-&gt;3)-beta-D-Gal-(1-&gt;4)-[alpha-L-Fuc-(1-&gt;3)]-beta-D-GlcNAc derivative + GDP + H(+). The enzyme catalyses an alpha-Neu5Ac-(2-&gt;3)-beta-D-Gal-(1-&gt;4)-beta-D-GlcNAc-(1-&gt;3)-beta-D-Gal-(1-&gt;4)-[alpha-L-Fuc-(1-&gt;3)]-beta-D-GlcNAc derivative + GDP-beta-L-fucose = an alpha-Neu5Ac-(2-&gt;3)-beta-D-Gal-(1-&gt;4)-[alpha-L-Fuc-(1-&gt;3)]-beta-D-GlcNAc-(1-&gt;3)-beta-D-Gal-(1-&gt;4)-[alpha-L-Fuc-(1-&gt;3)]-beta-D-GlcNAc derivative + GDP + H(+). It carries out the reaction a beta-D-galactosyl-(1-&gt;4)-N-acetyl-beta-D-glucosaminyl derivative + GDP-beta-L-fucose = a beta-D-galactosyl-(1-&gt;4)-[alpha-L-fucosyl-(1-&gt;3)]-N-acetyl-beta-D-glucosaminyl derivative + GDP + H(+). It catalyses the reaction a neolactoside nLc4Cer + GDP-beta-L-fucose = a neolactoside III(3)-alpha-Fuc-nLc4Cer + GDP + H(+). The catalysed reaction is a neolactoside nLc6Cer + GDP-beta-L-fucose = beta-D-galactosyl-(1-&gt;4)-N-acetyl-beta-D-glucosaminyl-(1-&gt;3)-beta-D-galactosyl-(1-&gt;4)-[alpha-L-fucosyl-(1-&gt;3)]-N-acetyl-beta-D-glucosaminyl-(1-&gt;3)-beta-D-galactosyl-(1-&gt;4)-beta-D-glucosyl-(1&lt;-&gt;1')-ceramide + GDP + H(+). The enzyme catalyses a neolactoside nLc6Cer(d18:1(4E)) + GDP-beta-L-fucose = a neolactoside III(3)-alpha-Fuc-nLc6Cer(d18:1(4E)) + GDP + H(+). It carries out the reaction a neolactoside nLc4Cer(d18:1(4E)) + GDP-beta-L-fucose = a neolactoside III(3)-alpha-Fuc-nLc4Cer(d18:1(4E)) + GDP + H(+). It catalyses the reaction a neolactoside VI(3)-alpha-NeuNAc-nLc6Cer + GDP-beta-L-fucose = a neolactoside VI(3)-alpha-NeuAc,III(3)-alphaFuc-nLc6Cer + GDP + H(+). The catalysed reaction is beta-D-galactosyl-(1-&gt;4)-N-acetyl-D-glucosamine + GDP-beta-L-fucose = beta-D-galactosyl-(1-&gt;4)-[alpha-L-fucosyl-(1-&gt;3)]-N-acetyl-D-glucosamine + GDP + H(+). The enzyme catalyses N-acetyl-alpha-neuraminosyl-(2-&gt;3)-beta-D-galactosyl-(1-&gt;4)-N-acetyl-beta-D-glucosamine + GDP-beta-L-fucose = N-acetyl-alpha-neuraminosyl-(2-&gt;3)-beta-D-galactosyl-(1-&gt;4)-[alpha-L-fucosyl-(1-&gt;3)]-N-acetyl-beta-D-glucosamine + GDP + H(+). It carries out the reaction alpha-L-Fuc-(1-&gt;2)-beta-D-Gal-(1-&gt;4)-D-GlcNAc + GDP-beta-L-fucose = alpha-L-Fuc-(1-&gt;2)-beta-D-Gal-(1-&gt;4)-[alpha-L-Fuc-(1-&gt;3)]-D-GlcNAc + GDP + H(+). It catalyses the reaction an alpha-Neu5Ac-(2-&gt;3)-beta-D-Gal-(1-&gt;3)-D-GlcNAc derivative + GDP-beta-L-fucose = an alpha-Neu5Ac-(2-&gt;3)-beta-D-Gal-(1-&gt;3)-[alpha-L-Fuc-(1-&gt;4)]-beta-D-GlcNAc derivative + GDP + H(+). It participates in protein modification; protein glycosylation. Catalyzes preferentially the transfer of L-fucose, from a guanosine diphosphate-beta-L-fucose, to the N-acetyl-beta-D-glucosamine (GlcNAc) of an N-acetyllactosamine unit (type 2 chain) of an oligosaccharide, or a glycoprotein- and a glycolipid-linked N-acetyllactosamine unit via an alpha (1,3) linkage and participates in the surface expression of VIM-2, Lewis X/SSEA-1 and sialyl Lewis X antigens. Preferentially transfers fucose to the GlcNAc of an internal N-acetyllactosamine unit of a poly-N-acetyllactosamine chain acceptor substrate. Also catalyzes to a lesser extend the transfer of L-fucose to the GlcNAc of a type 1 (beta-D-galactosyl-(1-&gt;3)-N-acetyl-beta-D-glucosaminyl) or H-type 1 (alpha-L-Fuc-(1-&gt;2)-beta-D-Gal-(1-&gt;3)-D-GlcNAc) chain oligosaccharide via an alpha (1,4) linkage. Preferentially catalyzes sialylated type 2 oligosaccharide acceptors over neutral type 2 or H type 2 (alpha-L-Fuc-(1-&gt;2)-beta-D-Gal-(1-&gt;4)-D-GlcNAc) oligosaccharide acceptors. Lactose-based structures are also acceptor substrates. This chain is 4-galactosyl-N-acetylglucosaminide 3-alpha-L-fucosyltransferase FUT5, found in Gorilla gorilla gorilla (Western lowland gorilla).